A 261-amino-acid chain; its full sequence is Kallikrein 1-related peptidase b16 (261 aa).

The first 18 residues, 1 to 18 (MWFLILFLALSLGGIDAA), serve as a signal peptide directing secretion. Positions 19–24 (PPVQSR) are cleaved as a propeptide — activation peptide. Residues 25–258 (IVGGFKCEKN…FNSWIKDTMM (234 aa)) enclose the Peptidase S1 domain. Cystine bridges form between C31–C173, C50–C66, C152–C219, C184–C198, and C209–C234. The active-site Charge relay system is H65. N102 carries N-linked (GlcNAc...) asparagine glycosylation. The active-site Charge relay system is the D120. The active-site Charge relay system is S213.

The protein belongs to the peptidase S1 family. Kallikrein subfamily.

The catalysed reaction is Cleavage of the Leu-|-Leu bond in synthetic tetradecapeptide renin substrate, to produce angiotensin I, but not active on natural angiotensinogen. Also hydrolyzes Bz-Arg-p-nitroanilide.. The chain is Kallikrein 1-related peptidase b16 (Klk1b16) from Mus musculus (Mouse).